A 55-amino-acid chain; its full sequence is MASSTDVRPKITLACEVCKHRNYITKKNRRNDPDRLEIKKFCPNCGKHQAHKESR.

Belongs to the bacterial ribosomal protein bL33 family.

The chain is Large ribosomal subunit protein bL33A from Mycolicibacterium vanbaalenii (strain DSM 7251 / JCM 13017 / BCRC 16820 / KCTC 9966 / NRRL B-24157 / PYR-1) (Mycobacterium vanbaalenii).